Here is an 855-residue protein sequence, read N- to C-terminus: Envelope glycoprotein gp160 (855 aa).

Residues 1 to 31 (MRAREIERNCPNLWKWGIMLLGILMICSAAD) form the signal peptide. The Extracellular segment spans residues 32-683 (NLWVTVYYGV…ITQWLWYIKI (652 aa)). Cysteine 53 and cysteine 73 are disulfide-bonded. Residues asparagine 87, asparagine 129, asparagine 140, asparagine 145, asparagine 154, asparagine 158, asparagine 186, asparagine 189, asparagine 199, asparagine 236, asparagine 243, asparagine 264, asparagine 278, asparagine 291, and asparagine 297 are each glycosylated (N-linked (GlcNAc...) asparagine; by host). Disulfide bonds link cysteine 118–cysteine 207, cysteine 125–cysteine 198, cysteine 130–cysteine 155, cysteine 220–cysteine 249, and cysteine 230–cysteine 241. The tract at residues 130-154 (CTDESDEWMGNVTGKNVTEDIRMKN) is V1. The V2 stretch occupies residues 155-198 (CSFNITTVVRDKTKQVHALFYRLDIVPIDNDNSTNSTNYRLINC). The interval 298 to 331 (CTRPYKNTRQSTPIGLGQALYTTRGRTKIIGQAH) is V3. Cysteines 298 and 332 form a disulfide. Residues asparagine 333, asparagine 340, and asparagine 355 are each glycosylated (N-linked (GlcNAc...) asparagine; by host). A CD4-binding loop region spans residues 364–374 (SSGGDAEITTH). Intrachain disulfides connect cysteine 378–cysteine 444 and cysteine 385–cysteine 417. The tract at residues 385–417 (CNTSGLFNSTWNINNSEGANSTESDNKLITLQC) is V4. Asparagine 386, asparagine 392, asparagine 398, asparagine 404, asparagine 443, asparagine 447, asparagine 460, asparagine 461, and asparagine 464 each carry an N-linked (GlcNAc...) asparagine; by host glycan. 2 V5 regions span residues 459–470 (TNNSSNETFRPG) and 462–470 (SSNETFRPG). Positions 511 to 531 (AIGLGAMFLGFLGAAGSTMGA) are fusion peptide. The segment at 573-591 (KQLQARILAVERYLKDQQL) is immunosuppression. An intrachain disulfide couples cysteine 597 to cysteine 603. N-linked (GlcNAc...) asparagine; by host glycosylation is found at asparagine 610, asparagine 615, asparagine 624, asparagine 636, and asparagine 673. The stretch at 632 to 666 (REIDNYTGLIYRLIEESQTQQEKNEQELLELDKWA) forms a coiled coil. Positions 661–682 (ELDKWASLWNWFNITQWLWYIK) are MPER; binding to GalCer. A helical membrane pass occupies residues 684 to 704 (FIMIVGGLIGLRIVFAVLSLV). Residues 705 to 855 (NRVRQGYSPL…IRQGLERLLL (151 aa)) are Cytoplasmic-facing. The short motif at 711–714 (YSPL) is the YXXL motif; contains endocytosis signal element. Residue cysteine 763 is the site of S-palmitoyl cysteine; by host attachment. A Di-leucine internalization motif motif is present at residues 854 to 855 (LL).

This sequence belongs to the HIV-1 env protein family. In terms of assembly, the mature envelope protein (Env) consists of a homotrimer of non-covalently associated gp120-gp41 heterodimers. The resulting complex protrudes from the virus surface as a spike. There seems to be as few as 10 spikes on the average virion. Interacts with host CD4, CCR5 and CXCR4. Gp120 also interacts with the C-type lectins CD209/DC-SIGN and CLEC4M/DC-SIGNR (collectively referred to as DC-SIGN(R)). Gp120 and gp41 interact with GalCer. Gp120 interacts with host ITGA4/ITGB7 complex; on CD4+ T-cells, this interaction results in rapid activation of integrin ITGAL/LFA-1, which facilitates efficient cell-to-cell spreading of HIV-1. Gp120 interacts with cell-associated heparan sulfate; this interaction increases virus infectivity on permissive cells and may be involved in infection of CD4- cells. The mature envelope protein (Env) consists of a homotrimer of non-covalently associated gp120-gp41 heterodimers. The resulting complex protrudes from the virus surface as a spike. There seems to be as few as 10 spikes on the average virion. Highly glycosylated by host. The high number of glycan on the protein is reffered to as 'glycan shield' because it contributes to hide protein sequence from adaptive immune system. Post-translationally, palmitoylation of the transmembrane protein and of Env polyprotein (prior to its proteolytic cleavage) is essential for their association with host cell membrane lipid rafts. Palmitoylation is therefore required for envelope trafficking to classical lipid rafts, but not for viral replication. In terms of processing, specific enzymatic cleavages in vivo yield mature proteins. Envelope glycoproteins are synthesized as an inactive precursor that is heavily N-glycosylated and processed likely by host cell furin in the Golgi to yield the mature SU and TM proteins. The cleavage site between SU and TM requires the minimal sequence [KR]-X-[KR]-R. About 2 of the 9 disulfide bonds of gp41 are reduced by P4HB/PDI, following binding to CD4 receptor.

The protein resides in the virion membrane. Its subcellular location is the host cell membrane. The protein localises to the host endosome membrane. Functionally, oligomerizes in the host endoplasmic reticulum into predominantly trimers. In a second time, gp160 transits in the host Golgi, where glycosylation is completed. The precursor is then proteolytically cleaved in the trans-Golgi and thereby activated by cellular furin or furin-like proteases to produce gp120 and gp41. Attaches the virus to the host lymphoid cell by binding to the primary receptor CD4. This interaction induces a structural rearrangement creating a high affinity binding site for a chemokine coreceptor like CXCR4 and/or CCR5. Acts as a ligand for CD209/DC-SIGN and CLEC4M/DC-SIGNR, which are respectively found on dendritic cells (DCs), and on endothelial cells of liver sinusoids and lymph node sinuses. These interactions allow capture of viral particles at mucosal surfaces by these cells and subsequent transmission to permissive cells. HIV subverts the migration properties of dendritic cells to gain access to CD4+ T-cells in lymph nodes. Virus transmission to permissive T-cells occurs either in trans (without DCs infection, through viral capture and transmission), or in cis (following DCs productive infection, through the usual CD4-gp120 interaction), thereby inducing a robust infection. In trans infection, bound virions remain infectious over days and it is proposed that they are not degraded, but protected in non-lysosomal acidic organelles within the DCs close to the cell membrane thus contributing to the viral infectious potential during DCs' migration from the periphery to the lymphoid tissues. On arrival at lymphoid tissues, intact virions recycle back to DCs' cell surface allowing virus transmission to CD4+ T-cells. In terms of biological role, acts as a class I viral fusion protein. Under the current model, the protein has at least 3 conformational states: pre-fusion native state, pre-hairpin intermediate state, and post-fusion hairpin state. During fusion of viral and target intracellular membranes, the coiled coil regions (heptad repeats) assume a trimer-of-hairpins structure, positioning the fusion peptide in close proximity to the C-terminal region of the ectodomain. The formation of this structure appears to drive apposition and subsequent fusion of viral and target cell membranes. Complete fusion occurs in host cell endosomes and is dynamin-dependent, however some lipid transfer might occur at the plasma membrane. The virus undergoes clathrin-dependent internalization long before endosomal fusion, thus minimizing the surface exposure of conserved viral epitopes during fusion and reducing the efficacy of inhibitors targeting these epitopes. Membranes fusion leads to delivery of the nucleocapsid into the cytoplasm. The chain is Envelope glycoprotein gp160 from Homo sapiens (Human).